The following is a 285-amino-acid chain: Ribosomal RNA small subunit methyltransferase A (285 aa).

Positions 11, 13, 37, 57, 85, and 105 each coordinate S-adenosyl-L-methionine.

Belongs to the class I-like SAM-binding methyltransferase superfamily. rRNA adenine N(6)-methyltransferase family. RsmA subfamily.

It localises to the cytoplasm. It catalyses the reaction adenosine(1518)/adenosine(1519) in 16S rRNA + 4 S-adenosyl-L-methionine = N(6)-dimethyladenosine(1518)/N(6)-dimethyladenosine(1519) in 16S rRNA + 4 S-adenosyl-L-homocysteine + 4 H(+). Specifically dimethylates two adjacent adenosines (A1518 and A1519) in the loop of a conserved hairpin near the 3'-end of 16S rRNA in the 30S particle. May play a critical role in biogenesis of 30S subunits. This is Ribosomal RNA small subunit methyltransferase A from Campylobacter curvus (strain 525.92).